A 440-amino-acid chain; its full sequence is Chromosome partition protein MukF (440 aa).

The segment at 208–236 (LSETSGTLRELQDTLDAAGDKLQANLLRI) is leucine-zipper.

This sequence belongs to the MukF family. Interacts, and probably forms a ternary complex, with MukE and MukB via its C-terminal region. The complex formation is stimulated by calcium or magnesium. It is required for an interaction between MukE and MukB.

The protein resides in the cytoplasm. It localises to the nucleoid. Its function is as follows. Involved in chromosome condensation, segregation and cell cycle progression. May participate in facilitating chromosome segregation by condensation DNA from both sides of a centrally located replisome during cell division. Not required for mini-F plasmid partitioning. Probably acts via its interaction with MukB and MukE. Overexpression results in anucleate cells. It has a calcium binding activity. The sequence is that of Chromosome partition protein MukF from Klebsiella pneumoniae (strain 342).